A 314-amino-acid polypeptide reads, in one-letter code: Cytochrome c biogenesis protein CcsA (314 aa).

8 consecutive transmembrane segments (helical) span residues valine 15–isoleucine 35, leucine 48–serine 68, isoleucine 73–leucine 93, isoleucine 102–leucine 122, valine 148–isoleucine 168, serine 216–asparagine 236, threonine 250–isoleucine 267, and alanine 277–leucine 297.

This sequence belongs to the CcmF/CycK/Ccl1/NrfE/CcsA family. In terms of assembly, may interact with ccs1.

Its subcellular location is the cellular thylakoid membrane. Functionally, required during biogenesis of c-type cytochromes (cytochrome c6 and cytochrome f) at the step of heme attachment. This Prochlorococcus marinus subsp. pastoris (strain CCMP1986 / NIES-2087 / MED4) protein is Cytochrome c biogenesis protein CcsA.